Consider the following 1007-residue polypeptide: Serine/threonine-protein kinase PRP4 homolog (1007 aa).

Positions 1-10 (MAAAETQSLR) are enriched in polar residues. The tract at residues 1–99 (MAAAETQSLR…EGMSPAKRTK (99 aa)) is disordered. An N-acetylalanine modification is found at alanine 2. Phosphoserine occurs at positions 8, 20, 23, and 32. Basic residues-rich tracts occupy residues 39–59 (KHSR…KHKH) and 67–81 (KKHK…HKRK). Residues 82 to 91 (EIIDASDKEG) are compositionally biased toward basic and acidic residues. 2 positions are modified to phosphoserine: serine 87 and serine 93. The residue at position 99 (lysine 99) is an N6-acetyllysine; alternate. Lysine 99 participates in a covalent cross-link: Glycyl lysine isopeptide (Lys-Gly) (interchain with G-Cter in SUMO2); alternate. Residue lysine 111 forms a Glycyl lysine isopeptide (Lys-Gly) (interchain with G-Cter in SUMO2) linkage. Lysine 117 is covalently cross-linked (Glycyl lysine isopeptide (Lys-Gly) (interchain with G-Cter in SUMO2); alternate). Lysine 117 is covalently cross-linked (Glycyl lysine isopeptide (Lys-Gly) (interchain with G-Cter in SUMO1); alternate). A Phosphoserine modification is found at serine 131. Phosphotyrosine is present on tyrosine 140. Disordered stretches follow at residues 140–533 (YESG…EEED) and 559–583 (SNMS…SPDD). A phosphoserine mark is found at serine 142, serine 144, and serine 166. Residues 157–168 (GNRSSTRSSSTK) show a composition bias toward low complexity. Glycyl lysine isopeptide (Lys-Gly) (interchain with G-Cter in SUMO2) cross-links involve residues lysine 170 and lysine 177. Composition is skewed to basic residues over residues 179-202 (TTKK…KKSK) and 214-230 (RSKS…SKRS). Serine 239, serine 241, serine 257, serine 277, serine 283, serine 292, and serine 294 each carry phosphoserine. Basic and acidic residues predominate over residues 247-270 (RSQEKIGKARSPTDDKVKIEDKSK). Basic residues predominate over residues 302–315 (SKDRRSRSKERKSK). Residues 316–325 (RSETDKEKKP) show a composition bias toward basic and acidic residues. Residues serine 328, serine 354, serine 356, serine 366, and serine 368 each carry the phosphoserine modification. The segment covering 342 to 367 (PSRRPGRSPKRRSLSPKPRDKSRRSR) has biased composition (basic residues). Phosphothreonine is present on threonine 385. A Phosphoserine modification is found at serine 387. Basic and acidic residues-rich tracts occupy residues 395–408 (RSLE…ERRR) and 415–429 (RPRD…RSKD). Residues serine 427, serine 431, and serine 437 each carry the phosphoserine modification. Basic residues predominate over residues 438-497 (PTRRRSRSPIRRRSRSPLRRSRSPRRRSRSPRRRDRGRRSRSRLRRRSRSRGGRRRRSRS). Serine 518, serine 519, serine 520, serine 565, serine 569, serine 578, and serine 580 each carry phosphoserine. The span at 518–533 (SSSDDNLEDFDVEEED) shows a compositional bias: acidic residues. The segment covering 562–581 (SVPSEPSSPQSSTRTRSPSP) has biased composition (low complexity). Residues lysine 593 and lysine 659 each participate in a glycyl lysine isopeptide (Lys-Gly) (interchain with G-Cter in SUMO2) cross-link. The Protein kinase domain occupies 687 to 1006 (YNVYGYTGQG…ALQHAFIQEK (320 aa)). Residues 693–701 (TGQGVFSNV) and lysine 717 each bind ATP. Lysine 717 carries the post-translational modification N6-acetyllysine. The Proton acceptor role is filled by aspartate 815. Tyrosine 849 carries the post-translational modification Phosphotyrosine. At serine 852 the chain carries Phosphoserine.

Belongs to the protein kinase superfamily. CMGC Ser/Thr protein kinase family. Interacts with CLK1 C-terminus. Associates with the U5 snRNP and NCOR1 deacetylase complexes. Identified in the spliceosome C complex. Post-translationally, phosphorylated by CLK1. Autophosphorylated; phosphorylation inhibits interaction with its targets, such as PRPF6 or SMARCA4. As to expression, ubiquitous.

It is found in the nucleus. Its subcellular location is the chromosome. The protein localises to the centromere. The protein resides in the kinetochore. It carries out the reaction L-seryl-[protein] + ATP = O-phospho-L-seryl-[protein] + ADP + H(+). It catalyses the reaction L-threonyl-[protein] + ATP = O-phospho-L-threonyl-[protein] + ADP + H(+). Its function is as follows. Serine/threonine kinase involved in spliceosomal assembly as well as mitosis and signaling regulation. Connects chromatin mediated regulation of transcription and pre-mRNA splicing. During spliceosomal assembly, interacts with and phosphorylates PRPF6 and PRPF31, components of the U4/U6-U5 tri-small nuclear ribonucleoprotein (snRNP), to facilitate the formation of the spliceosome B complex. Plays a role in regulating transcription and the spindle assembly checkpoint (SAC). Associates with U5 snRNP and NCOR1 deacetylase complexes which may allow a coordination of pre-mRNA splicing with chromatin remodeling events involved in transcriptional regulation. Associates and probably phosphorylates SMARCA4 and NCOR1. Phosphorylates SRSF1. Associates with kinetochores during mitosis and is necessary for recruitment and maintenance of the checkpoint proteins such as MAD1L1 and MAD12L1 at the kinetochores. Phosphorylates and regulates the activity of the transcription factors such as ELK1 and KLF13. Phosphorylates nuclear YAP1 and WWTR1/TAZ which induces nuclear exclusion and regulates Hippo signaling pathway, involved in tissue growth control. The protein is Serine/threonine-protein kinase PRP4 homolog of Homo sapiens (Human).